A 548-amino-acid polypeptide reads, in one-letter code: Luciferin 4-monooxygenase (548 aa).

Positions 546–548 (AKM) match the Microbody targeting signal motif.

Belongs to the ATP-dependent AMP-binding enzyme family. Requires Mg(2+) as cofactor.

It localises to the peroxisome. The catalysed reaction is firefly D-luciferin + ATP + O2 = firefly oxyluciferin + hnu + AMP + CO2 + diphosphate. In terms of biological role, produces green light with a wavelength of 544 nm. This chain is Luciferin 4-monooxygenase, found in Nipponoluciola cruciata (Genji firefly).